The following is a 183-amino-acid chain: MTAPKATILSSDEIRRALTRIAHEIIERNKGAENLAIIGVHTRGIPLAERLASKLSELEGVEVPRGMLDITLYRDDLSEVARQPIIRETQVPFDLADRRVILVDDVLYTGRTVRAALDALIDLGRPEGIQLAVLVDRGHRELPIRADYVGKNLPTAKHEVVKVKLQETDGTDIVELFDPEDLQ.

Residues 42–43 (TR), R87, 104–112 (DDVLYTGRT), R137, and V161 each bind substrate. Positions 100–112 (VILVDDVLYTGRT) match the PRPP-binding motif.

This sequence belongs to the purine/pyrimidine phosphoribosyltransferase family. PyrR subfamily.

The catalysed reaction is UMP + diphosphate = 5-phospho-alpha-D-ribose 1-diphosphate + uracil. In terms of biological role, regulates the transcription of the pyrimidine nucleotide (pyr) operon in response to exogenous pyrimidines. Functionally, also displays a weak uracil phosphoribosyltransferase activity which is not physiologically significant. The chain is Bifunctional protein PyrR from Deinococcus radiodurans (strain ATCC 13939 / DSM 20539 / JCM 16871 / CCUG 27074 / LMG 4051 / NBRC 15346 / NCIMB 9279 / VKM B-1422 / R1).